The primary structure comprises 249 residues: Putative TrmH family tRNA/rRNA methyltransferase (249 aa).

Residues Gly196, Ile216, and Leu225 each coordinate S-adenosyl-L-methionine.

This sequence belongs to the class IV-like SAM-binding methyltransferase superfamily. RNA methyltransferase TrmH family.

The chain is Putative TrmH family tRNA/rRNA methyltransferase from Staphylococcus haemolyticus (strain JCSC1435).